We begin with the raw amino-acid sequence, 287 residues long: Syntaxin-11 (287 aa).

The stretch at 41–71 (LESLYRVIQDIQDENQLLLIDVRRLGRQNVR) forms a coiled coil. One can recognise a t-SNARE coiled-coil homology domain in the interval 204 to 266 (LNEIESRHRE…GEAKAQVRKA (63 aa)).

It belongs to the syntaxin family. In terms of assembly, interacts with the SNARE proteins SNAP-23 and VAMP.

The protein resides in the membrane. It is found in the golgi apparatus. The protein localises to the trans-Golgi network membrane. Functionally, SNARE that acts to regulate protein transport between late endosomes and the trans-Golgi network. The chain is Syntaxin-11 (Stx11) from Mus musculus (Mouse).